A 229-amino-acid polypeptide reads, in one-letter code: Ribonuclease 3 (229 aa).

The 130-residue stretch at 4–133 (WEELQESVGF…FIGALYLDNG (130 aa)) folds into the RNase III domain. Position 46 (Glu-46) interacts with Mg(2+). Residue Asp-50 is part of the active site. Mg(2+) contacts are provided by Asp-119 and Glu-122. The active site involves Glu-122. Positions 159 to 228 (DYKTQLQEIV…AQFAINQLTH (70 aa)) constitute a DRBM domain.

This sequence belongs to the ribonuclease III family. As to quaternary structure, homodimer. Mg(2+) is required as a cofactor.

The protein localises to the cytoplasm. It catalyses the reaction Endonucleolytic cleavage to 5'-phosphomonoester.. Digests double-stranded RNA. Involved in the processing of primary rRNA transcript to yield the immediate precursors to the large and small rRNAs (23S and 16S). Processes some mRNAs, and tRNAs when they are encoded in the rRNA operon. Processes pre-crRNA and tracrRNA of type II CRISPR loci if present in the organism. The sequence is that of Ribonuclease 3 from Listeria monocytogenes serotype 4a (strain HCC23).